The sequence spans 217 residues: Glutathione S-transferase B (217 aa).

The 87-residue stretch at 1 to 87 (PMTLGYWNIR…YIARKHNLCG (87 aa)) folds into the GST N-terminal domain. Glutathione is bound by residues 6 to 7 (YW), 45 to 49 (WLNEK), 58 to 59 (NL), and 71 to 72 (QS). The region spanning 89 to 207 (TEEETIRMDI…KSSRFLPKPL (119 aa)) is the GST C-terminal domain. Y115 contributes to the substrate binding site.

It belongs to the GST superfamily. Mu family. As to quaternary structure, homodimer.

It localises to the cytoplasm. It catalyses the reaction RX + glutathione = an S-substituted glutathione + a halide anion + H(+). It carries out the reaction prostaglandin A2 + glutathione = prostaglandin A2-S-(R)-glutathione. The catalysed reaction is prostaglandin J2 + glutathione = prostaglandin J2-S-(R)-glutathione. The enzyme catalyses prostaglandin J2 + glutathione = prostaglandin J2-S-(S)-glutathione. It catalyses the reaction prostaglandin A2 + glutathione = prostaglandin A2-S-(S)-glutathione. It carries out the reaction 11(S)-hydroxy-14(S),15(S)-epoxy-(5Z,8Z,12E)-eicosatrienoate + glutathione = (11S,15S)-dihydroxy-14(R)-S-glutathionyl-(5Z,8Z,12E)-eicosatrienoate. Its function is as follows. Conjugation of reduced glutathione to a wide number of exogenous and endogenous hydrophobic electrophiles. Involved in the formation of glutathione conjugates of both prostaglandin A2 (PGA2) and prostaglandin J2 (PGJ2). Participates in the formation of novel hepoxilin regioisomers. This chain is Glutathione S-transferase B (GSTM1), found in Cavia porcellus (Guinea pig).